Reading from the N-terminus, the 150-residue chain is Large ribosomal subunit protein uL13 (150 aa).

Positions Ala129–Gln150 are disordered.

The protein belongs to the universal ribosomal protein uL13 family. As to quaternary structure, part of the 50S ribosomal subunit.

Its function is as follows. This protein is one of the early assembly proteins of the 50S ribosomal subunit, although it is not seen to bind rRNA by itself. It is important during the early stages of 50S assembly. This chain is Large ribosomal subunit protein uL13, found in Synechococcus sp. (strain WH7803).